Consider the following 192-residue polypeptide: ADP-ribosylation factor-like protein 14 (192 aa).

A lipid anchor (N-myristoyl glycine) is attached at Gly2. GTP-binding positions include 20–27 (GLDSAGKS), 64–68 (DVGGQ), and 124–127 (NKQD).

This sequence belongs to the small GTPase superfamily. Arf family. Interacts with ARL14EP.

It localises to the cytoplasmic vesicle. GTPase that recruits MYO1E to MHC class II-containing vesicles via the effector protein ARL14EP and hence controls the movement of these vesicles along the actin cytoskeleton in dendritic cells. The sequence is that of ADP-ribosylation factor-like protein 14 (Arl14) from Mus musculus (Mouse).